A 554-amino-acid chain; its full sequence is MSLCTSSHKDFSQLLPLQDIGCNKTEIKNSPAGVISPAPYSCNQSTLTAEHSPVYIPSSYMESRHEYSTMAFCSPAMVNYNIASNFGDPEAVAARQTSSPGALWSAPGHLSPLSLHCQSSLLYAEQPKSLWCEARPMEPVLPGSRETLKRKTNGNDCTSPIANNPGSKKDAHFCAVCSDYASGYHYGVWSCEGCKAFFKRSIQGHNDYICPATNQCTIDKNRRKSCQACRLRKCYEVGMMKCGSRRERCGYRILRSHRGAEERVHCLGRARRYSEAATRVKEILLSTVSPEQFVLTLLEAEPPHVLVSRPSKPFTEASMMMSLTKLADKELVHMIGWAKKIPGFIDLSLYDQVRLLESCWMEVLMIGLMWRSIDHPGKLIFAPDLVLDRDEGKCVEGILEIFDMLLAMTSRFRELKLQHKEYLCVKAMILLNSSMFPLSAEEPESNRKLHHLLNVVTEALVWVIAKSGIPSQQQTTRLANLLMLLSHVRHASNKGMEHLLSMKCKNVVPVYDLLLEMLNAHTLRGQRKPLATHPEFGPLEQMEPGESLRKGEPQ.

Residues 25-173 (TEIKNSPAGV…NPGSKKDAHF (149 aa)) are modulating. 2 consecutive NR C4-type zinc fingers follow at residues 174–194 (CAVC…CEGC) and 210–234 (CPAT…LRKC). A DNA-binding region (nuclear receptor) is located at residues 174–239 (CAVCSDYASG…RLRKCYEVGM (66 aa)). Residues 289–521 (SPEQFVLTLL…DLLLEMLNAH (233 aa)) form the NR LBD domain. Residues 529–554 (PLATHPEFGPLEQMEPGESLRKGEPQ) are disordered.

Belongs to the nuclear hormone receptor family. NR3 subfamily. As to quaternary structure, binds DNA as a homodimer. Can form a heterodimer with ER-alpha. Brain, pituitary, skeletal muscle, liver, adrenal, kidney, intestine and ovary.

The protein localises to the nucleus. Its function is as follows. Binds estrogens with an affinity similar to that of ER-alpha, and activates expression of reporter genes containing estrogen response elements (ERE) in an estrogen-dependent manner. Locally synthesized estrogens may act via ER beta, in addition to ER alpha, to mediate seasonal or developmental effects on nearby song nuclei. The chain is Estrogen receptor beta (ESR2) from Sturnus vulgaris (Starling).